Reading from the N-terminus, the 554-residue chain is Glypican-1 (554 aa).

An N-terminal signal peptide occupies residues 1-21 (MERLCWGWWWHLGILCLMHWA). 7 cysteine pairs are disulfide-bonded: cysteine 32–cysteine 68, cysteine 62–cysteine 256, cysteine 69–cysteine 259, cysteine 191–cysteine 343, cysteine 246–cysteine 279, cysteine 268–cysteine 415, and cysteine 272–cysteine 401. Residues asparagine 79 and asparagine 116 are each glycosylated (N-linked (GlcNAc...) asparagine). Residues 346–369 (PKKTNKGSKSEERRRKGKATQEDK) are disordered. Over residues 353 to 369 (SKSEERRRKGKATQEDK) the composition is skewed to basic and acidic residues. Serine 486, serine 488, and serine 490 each carry an O-linked (Xyl...) (heparan sulfate) serine glycan.

Belongs to the glypican family. In terms of processing, O-glycosylated with heparan sulfate side chains.

The protein localises to the cell membrane. The protein resides in the secreted. Its subcellular location is the extracellular space. Its function is as follows. Cell surface proteoglycan that bears heparan sulfate. The polypeptide is Glypican-1 (gpc1) (Xenopus tropicalis (Western clawed frog)).